The primary structure comprises 293 residues: tRNA pseudouridine synthase A (293 aa).

Catalysis depends on Asp67, which acts as the Nucleophile. Tyr125 lines the substrate pocket.

This sequence belongs to the tRNA pseudouridine synthase TruA family. In terms of assembly, homodimer.

It catalyses the reaction uridine(38/39/40) in tRNA = pseudouridine(38/39/40) in tRNA. Formation of pseudouridine at positions 38, 39 and 40 in the anticodon stem and loop of transfer RNAs. This Synechococcus sp. (strain CC9605) protein is tRNA pseudouridine synthase A.